Here is a 370-residue protein sequence, read N- to C-terminus: A-type ATP synthase subunit C (370 aa).

This sequence belongs to the V-ATPase V0D/AC39 subunit family. Has multiple subunits with at least A(3), B(3), C, D, E, F, H, I and proteolipid K(x).

It is found in the cell membrane. Functionally, component of the A-type ATP synthase that produces ATP from ADP in the presence of a proton gradient across the membrane. The protein is A-type ATP synthase subunit C of Pyrococcus horikoshii (strain ATCC 700860 / DSM 12428 / JCM 9974 / NBRC 100139 / OT-3).